The chain runs to 204 residues: Elongation factor Ts (204 aa).

Positions 80–83 (TDFV) are involved in Mg(2+) ion dislocation from EF-Tu.

This sequence belongs to the EF-Ts family.

Its subcellular location is the cytoplasm. Associates with the EF-Tu.GDP complex and induces the exchange of GDP to GTP. It remains bound to the aminoacyl-tRNA.EF-Tu.GTP complex up to the GTP hydrolysis stage on the ribosome. In Caldicellulosiruptor saccharolyticus (strain ATCC 43494 / DSM 8903 / Tp8T 6331), this protein is Elongation factor Ts.